Reading from the N-terminus, the 208-residue chain is LexA repressor (208 aa).

Residues 28 to 48 constitute a DNA-binding region (H-T-H motif); sequence RAEIARELGFRSANAAEEHLK. Catalysis depends on for autocatalytic cleavage activity residues serine 125 and lysine 162.

Belongs to the peptidase S24 family. In terms of assembly, homodimer.

It carries out the reaction Hydrolysis of Ala-|-Gly bond in repressor LexA.. Its function is as follows. Represses a number of genes involved in the response to DNA damage (SOS response), including recA and lexA. In the presence of single-stranded DNA, RecA interacts with LexA causing an autocatalytic cleavage which disrupts the DNA-binding part of LexA, leading to derepression of the SOS regulon and eventually DNA repair. The chain is LexA repressor from Aliivibrio fischeri (strain MJ11) (Vibrio fischeri).